The following is a 298-amino-acid chain: MTQTVPYRCGRIAVIGRPNVGKSTLTNALVGTKISIVSNRPQTTRHRLLGIATFPEGQIVLVDTPGLHREQKHPMNRLMNRTARGSLEDVDAALLVTESTHWNEEDTLAYNLLNDTGIPVVLVINKIDRFKDKSALLPLLTHINENHTFATIHPVSALKRKGLETLVSDLLALLPEGDPMFSEDEITDRSQRFLASELVREQVMRQLGEELPYATTVEIEYFTENTGLFRIGALIWVERESQKAIVIGKGGARLKEIGVKARQQMERLFQTKVFLETWVRVRKDWSNNEAALKTFGYE.

Positions arginine 8–glutamate 176 constitute an Era-type G domain. A G1 region spans residues glycine 16 to serine 23. Glycine 16–serine 23 contributes to the GTP binding site. The segment at glutamine 42–histidine 46 is G2. The G3 stretch occupies residues aspartate 63–glycine 66. Residues aspartate 63 to leucine 67 and asparagine 125 to aspartate 128 each bind GTP. The G4 stretch occupies residues asparagine 125–aspartate 128. The interval valine 155–alanine 157 is G5. Positions valine 199 to lysine 283 constitute a KH type-2 domain.

Belongs to the TRAFAC class TrmE-Era-EngA-EngB-Septin-like GTPase superfamily. Era GTPase family. Monomer.

The protein localises to the cytoplasm. The protein resides in the cell inner membrane. In terms of biological role, an essential GTPase that binds both GDP and GTP, with rapid nucleotide exchange. Plays a role in 16S rRNA processing and 30S ribosomal subunit biogenesis and possibly also in cell cycle regulation and energy metabolism. This is GTPase Era from Xylella fastidiosa (strain M12).